The sequence spans 606 residues: Zinc finger protein 652 (606 aa).

Serine 57 bears the Phosphoserine mark. Residues 71–97 are compositionally biased toward basic and acidic residues; it reads HLHETEEQPYFRETRAVSDVHAVKEDR. Disordered regions lie at residues 71-113 and 130-235; these read HLHE…VSYK and VSKG…APVQ. Residues 98 to 109 are compositionally biased toward acidic residues; that stretch reads ENSDDTEEEEEE. Serine 100 bears the Phosphoserine mark. Phosphothreonine is present on threonine 103. A compositionally biased stretch (polar residues) spans 137-149; it reads VSSQSKETPVLKT. The span at 152–170 shows a compositional bias: acidic residues; the sequence is EEEEEESEEEATDDSNDYG. Residues 171–183 show a composition bias toward basic and acidic residues; the sequence is ENEKQKKKEKIVE. The span at 184–209 shows a compositional bias: low complexity; the sequence is KVSVTQRRTRRAASVAAATTSPTPRT. A phosphoserine mark is found at serine 197 and serine 204. The C2H2-type 1 zinc finger occupies 245 to 268; sequence LTCEKCPRVFNTRWYLEKHMNVTH. A C2H2-type 2; degenerate zinc finger spans residues 272-294; it reads QICDKCGKKFVLESELSLHQQTD. 6 consecutive C2H2-type zinc fingers follow at residues 299–322, 329–351, 357–379, 385–407, 413–435, and 441–463; these read IQCV…KIVH, FSCE…MVAH, FTCE…SLQH, FRCE…MSIH, FMCQ…MKTH, and FICE…RRTH. The C2H2-type 9; degenerate zinc-finger motif lies at 469-492; it reads YPCDVCGQRFRFSNMLKAHKEKCF. Positions 498-606 are mediates interaction with CBFA2T3; sequence VNVPPAVQIP…AEKNSSAQHH (109 aa).

This sequence belongs to the krueppel C2H2-type zinc-finger protein family. In terms of assembly, interacts with CBFA2T3. Widely expressed with higher expression in breast, prostate, vulva and pancreas.

The protein resides in the nucleus. Functions as a transcriptional repressor. The protein is Zinc finger protein 652 (ZNF652) of Homo sapiens (Human).